The sequence spans 224 residues: 2-C-methyl-D-erythritol 4-phosphate cytidylyltransferase (224 aa).

Belongs to the IspD/TarI cytidylyltransferase family. IspD subfamily.

The enzyme catalyses 2-C-methyl-D-erythritol 4-phosphate + CTP + H(+) = 4-CDP-2-C-methyl-D-erythritol + diphosphate. It participates in isoprenoid biosynthesis; isopentenyl diphosphate biosynthesis via DXP pathway; isopentenyl diphosphate from 1-deoxy-D-xylulose 5-phosphate: step 2/6. Catalyzes the formation of 4-diphosphocytidyl-2-C-methyl-D-erythritol from CTP and 2-C-methyl-D-erythritol 4-phosphate (MEP). This is 2-C-methyl-D-erythritol 4-phosphate cytidylyltransferase from Caldicellulosiruptor saccharolyticus (strain ATCC 43494 / DSM 8903 / Tp8T 6331).